Consider the following 52-residue polypeptide: Insulin (52 aa).

Disulfide bonds link cysteine 7–cysteine 38, cysteine 19–cysteine 51, and cysteine 37–cysteine 42.

Belongs to the insulin family. In terms of assembly, heterodimer of a B chain and an A chain linked by two disulfide bonds.

Its subcellular location is the secreted. Insulin decreases blood glucose concentration. It increases cell permeability to monosaccharides, amino acids and fatty acids. It accelerates glycolysis, the pentose phosphate cycle, and glycogen synthesis in liver. The chain is Insulin (ins) from Atractosteus spatula (Alligator gar).